A 362-amino-acid chain; its full sequence is MDLHLFDYSEPGNFSDISWPCNSSDCIVVDTVMCPNMPNKSVLLYTLSFIYIFIFVIGMIANSVVVWVNIQAKTTGYDTHCYILNLAIADLWVVLTIPVWVVSLVQHNQWPMGELTCKVTHLIFSINLFGSIFFLTCMSVDRYLSITYFTNTPSSRKKMVRRVVCILVWLLAFCVSLPDTYYLKTVTSASNNETYCRSFYPEHSIKEWLIGMELVSVVLGFAVPFSIIAVFYFLLARAISASSDQEKHSSRKIIFSYVVVFLVCWLPYHVAVLLDIFSILHYIPFTCRLEHALFTALHVTQCLSLVHCCVNPVLYSFINRNYRYELMKAFIFKYSAKTGLTKLIDASRVSETEYSALEQSTK.

At 1-40 (MDLHLFDYSEPGNFSDISWPCNSSDCIVVDTVMCPNMPNK) the chain is on the extracellular side. N-linked (GlcNAc...) asparagine glycosylation is found at Asn13, Asn22, and Asn39. Residues 41–61 (SVLLYTLSFIYIFIFVIGMIA) traverse the membrane as a helical segment. Residues 62–81 (NSVVVWVNIQAKTTGYDTHC) lie on the Cytoplasmic side of the membrane. The chain crosses the membrane as a helical span at residues 82-102 (YILNLAIADLWVVLTIPVWVV). Residues 103–118 (SLVQHNQWPMGELTCK) are Extracellular-facing. Cys117 and Cys196 are disulfide-bonded. The helical transmembrane segment at 119 to 139 (VTHLIFSINLFGSIFFLTCMS) threads the bilayer. Over 140-162 (VDRYLSITYFTNTPSSRKKMVRR) the chain is Cytoplasmic. The chain crosses the membrane as a helical span at residues 163 to 183 (VVCILVWLLAFCVSLPDTYYL). Residues 184–213 (KTVTSASNNETYCRSFYPEHSIKEWLIGME) are Extracellular-facing. A helical transmembrane segment spans residues 214 to 234 (LVSVVLGFAVPFSIIAVFYFL). Over 235 to 252 (LARAISASSDQEKHSSRK) the chain is Cytoplasmic. The helical transmembrane segment at 253 to 273 (IIFSYVVVFLVCWLPYHVAVL) threads the bilayer. Over 274–296 (LDIFSILHYIPFTCRLEHALFTA) the chain is Extracellular. A helical membrane pass occupies residues 297–319 (LHVTQCLSLVHCCVNPVLYSFIN). At 320 to 362 (RNYRYELMKAFIFKYSAKTGLTKLIDASRVSETEYSALEQSTK) the chain is on the cytoplasmic side. Positions 324-362 (YELMKAFIFKYSAKTGLTKLIDASRVSETEYSALEQSTK) are C-terminal cytoplasmic tail. Ser347, Ser350, and Ser355 each carry phosphoserine.

The protein belongs to the G-protein coupled receptor 1 family. Atypical chemokine receptor subfamily. As to quaternary structure, homodimer. Can form heterodimers with CXCR4; heterodimerization may regulate CXCR4 signaling activity. Interacts with ARRB1 and ARRB2. In terms of processing, the Ser/Thr residues in the C-terminal cytoplasmic tail may be phosphorylated. Post-translationally, ubiquitinated at the Lys residues in its C-terminal cytoplasmic tail and is essential for correct trafficking from and to the cell membrane. Deubiquitinated by CXCL12-stimulation in a reversible manner. As to expression, expressed in monocytes, basophils, B-cells, umbilical vein endothelial cells (HUVEC) and B-lymphoblastoid cells. Lower expression detected in CD4+ T-lymphocytes and natural killer cells. In the brain, detected in endothelial cells and capillaries, and in mature neurons of the frontal cortex and hippocampus. Expressed in tubular formation in the kidney. Highly expressed in astroglial tumor endothelial, microglial and glioma cells. Expressed at low levels in normal CD34+ progenitor cells, but at very high levels in several myeloid malignant cell lines. Expressed in breast carcinomas but not in normal breast tissue (at protein level).

It localises to the cell membrane. It is found in the early endosome. The protein localises to the recycling endosome. Atypical chemokine receptor that controls chemokine levels and localization via high-affinity chemokine binding that is uncoupled from classic ligand-driven signal transduction cascades, resulting instead in chemokine sequestration, degradation, or transcytosis. Also known as interceptor (internalizing receptor) or chemokine-scavenging receptor or chemokine decoy receptor. Acts as a receptor for chemokines CXCL11 and CXCL12/SDF1. Chemokine binding does not activate G-protein-mediated signal transduction but instead induces beta-arrestin recruitment, leading to ligand internalization and activation of MAPK signaling pathway. Required for regulation of CXCR4 protein levels in migrating interneurons, thereby adapting their chemokine responsiveness. In glioma cells, transduces signals via MEK/ERK pathway, mediating resistance to apoptosis. Promotes cell growth and survival. Not involved in cell migration, adhesion or proliferation of normal hematopoietic progenitors but activated by CXCL11 in malignant hemapoietic cells, leading to phosphorylation of ERK1/2 (MAPK3/MAPK1) and enhanced cell adhesion and migration. Plays a regulatory role in CXCR4-mediated activation of cell surface integrins by CXCL12. Required for heart valve development. Regulates axon guidance in the oculomotor system through the regulation of CXCL12 levels. Functionally, (Microbial infection) Acts as a coreceptor with CXCR4 for a restricted number of HIV isolates. This is Atypical chemokine receptor 3 from Homo sapiens (Human).